The primary structure comprises 228 residues: ATP synthase subunit beta, mitochondrial (228 aa).

The transit peptide at 1–31 directs the protein to the mitochondrion; sequence MFALRAAAKADKNLLPFLGQLSRSHAAKAAK. 183 to 190 contacts ATP; that stretch reads GGAGVGKT.

It belongs to the ATPase alpha/beta chains family. In terms of assembly, F-type ATPases have 2 components, CF(1) - the catalytic core - and CF(0) - the membrane proton channel. CF(1) has five subunits: alpha(3), beta(3), gamma(1), delta(1), epsilon(1). CF(0) has three main subunits: a, b and c.

It is found in the mitochondrion. The protein resides in the mitochondrion inner membrane. It catalyses the reaction ATP + H2O + 4 H(+)(in) = ADP + phosphate + 5 H(+)(out). Its function is as follows. Mitochondrial membrane ATP synthase (F(1)F(0) ATP synthase or Complex V) produces ATP from ADP in the presence of a proton gradient across the membrane which is generated by electron transport complexes of the respiratory chain. F-type ATPases consist of two structural domains, F(1) - containing the extramembraneous catalytic core, and F(0) - containing the membrane proton channel, linked together by a central stalk and a peripheral stalk. During catalysis, ATP synthesis in the catalytic domain of F(1) is coupled via a rotary mechanism of the central stalk subunits to proton translocation. Subunits alpha and beta form the catalytic core in F(1). Rotation of the central stalk against the surrounding alpha(3)beta(3) subunits leads to hydrolysis of ATP in three separate catalytic sites on the beta subunits. The chain is ATP synthase subunit beta, mitochondrial from Drosophila virilis (Fruit fly).